Here is a 1160-residue protein sequence, read N- to C-terminus: Nck-associated protein 1 homolog (1160 aa).

This sequence belongs to the HEM-1/HEM-2 family. As to quaternary structure, part of a Scar/WAVE complex containing brk1, scrA, abiA, pirA and napA.

In terms of biological role, involved in regulation of actin and microtubule organization. Involved in cell adhesion. The sequence is that of Nck-associated protein 1 homolog (napA) from Dictyostelium discoideum (Social amoeba).